The primary structure comprises 220 residues: MKKQLVLFCDFDGTITENDNIIAIMKQFAPPEWEALKDDILAERLSVQEGVGKMFSLLPSALKDEIVDFLLSTARLREGFREFVAFTKEKGIPLYIVSGGIDFFVYPMLDGLIDKERIFCNGSDFSSEMIRITWPHACDGKCQNGCGCCKPSLLRKLARPDGYHVVIGDSITDLAVAKQADYVLARDFLLKKCQELDLPHAPFTTFFDVVDHLQRLEVIA.

It belongs to the HAD-like hydrolase superfamily. MtnX family.

It catalyses the reaction 2-hydroxy-5-methylsulfanyl-3-oxopent-1-enyl phosphate + H2O = 1,2-dihydroxy-5-(methylsulfanyl)pent-1-en-3-one + phosphate. Its pathway is amino-acid biosynthesis; L-methionine biosynthesis via salvage pathway; L-methionine from S-methyl-5-thio-alpha-D-ribose 1-phosphate: step 4/6. Functionally, dephosphorylates 2-hydroxy-3-keto-5-methylthiopentenyl-1-phosphate (HK-MTPenyl-1-P) yielding 1,2-dihydroxy-3-keto-5-methylthiopentene (DHK-MTPene). The protein is 2-hydroxy-3-keto-5-methylthiopentenyl-1-phosphate phosphatase of Geobacillus thermodenitrificans (strain NG80-2).